Reading from the N-terminus, the 638-residue chain is MTHPPKTPLLDQVTYPADLRKLEDRDLPQLAREVRDEMIDAVSRTGGHLGAGLGVVELTIAIHSVFDTPNDRLIFDVGHQCYPHKILTGRRDRIRTLRQENGLSGFTRRAESEYDPFGAAHSSTSISAGLGMAIAADLEKTDRRVIAVIGDGAMSAGMAYEALNNAGALDARLIVILNDNDMSIAPPTGAMSAYLARLASGRTYMGFRDFGKKLTAYLGKNIDRAITRAVEHARGYVTGGTMFEEMGFYHIGPIDGHSFDHLLPVLRNVRDNARGPVLIHVVTQKGKGYPPAEAAADKYHGVNKFDVITGAQARVKPNAPSYTSVFAEALVQEAALDDKIVGITAAMPNGTGLDKLAEAFPSRCFDVGIAEQHAVTFAAGLAAEGYKPFAALYSTFLQRAYDQVVHDVAIQGLPVRFPIDRAGFVGADGPTHAGSFDTAFLATLPGFVVMAAADEAELKHMVRTAAAYDAGPISFRYPRGEGVGVDMPARGEILQIGKGRIVKEGTKVALLSFGTRLADCLLASEDLEAAGLSTTVADARFAKPLDHELLRQLARHHEMLITVEEGSVGGFGSQVMQYLSSEGLLDNGLKIRSLVMPDIWMEQAKPEAMNAHAGLDRAGIVSTVFRALRRGVAVGVAG.

Residues His79 and 120-122 contribute to the thiamine diphosphate site; that span reads AHS. Asp151 lines the Mg(2+) pocket. Thiamine diphosphate contacts are provided by residues 152–153, Asn180, Tyr289, and Glu371; that span reads GA. Asn180 contributes to the Mg(2+) binding site.

The protein belongs to the transketolase family. DXPS subfamily. As to quaternary structure, homodimer. Mg(2+) serves as cofactor. The cofactor is thiamine diphosphate.

The catalysed reaction is D-glyceraldehyde 3-phosphate + pyruvate + H(+) = 1-deoxy-D-xylulose 5-phosphate + CO2. It participates in metabolic intermediate biosynthesis; 1-deoxy-D-xylulose 5-phosphate biosynthesis; 1-deoxy-D-xylulose 5-phosphate from D-glyceraldehyde 3-phosphate and pyruvate: step 1/1. Functionally, catalyzes the acyloin condensation reaction between C atoms 2 and 3 of pyruvate and glyceraldehyde 3-phosphate to yield 1-deoxy-D-xylulose-5-phosphate (DXP). The polypeptide is 1-deoxy-D-xylulose-5-phosphate synthase (Rhizobium etli (strain ATCC 51251 / DSM 11541 / JCM 21823 / NBRC 15573 / CFN 42)).